A 150-amino-acid polypeptide reads, in one-letter code: C-C motif chemokine 25 (150 aa).

A signal peptide spans 1–23 (MNLWLLACLVAGFLGAWAPAVHT). Disulfide bonds link cysteine 30–cysteine 58 and cysteine 31–cysteine 75.

It belongs to the intercrine beta (chemokine CC) family. Specifically expressed by thymic dendritic cells. High levels in thymus and small intestine.

Its subcellular location is the secreted. Functionally, potentially involved in T-cell development. Recombinant protein shows chemotactic activity on thymocytes, macrophages, THP-1 cells, and dendritics cells but is inactive on peripheral blood lymphocytes and neutrophils. Binds to CCR9. Isoform 2 is an antagonist of isoform 1. Binds to atypical chemokine receptor ACKR4 and mediates the recruitment of beta-arrestin (ARRB1/2) to ACKR4. The polypeptide is C-C motif chemokine 25 (CCL25) (Homo sapiens (Human)).